The primary structure comprises 245 residues: Polyhedrin (245 aa).

The segment at 32–35 (KRKK) is nuclear localization signal.

The protein belongs to the polyhedrin family.

The protein localises to the host nucleus. Major component of the virus occlusion bodies which are large proteinaceous structures termed polyhedra. These structures serve as the protective package for the virus particles outside the infected host and allow natural transmission of virus between insect hosts, assisting persistence in the environment. Forms the paracrystalline lattice of polyhedra and interacts with enveloped virions as well as other accessory molecules and structures to form a mature viral occlusion body. The protein is Polyhedrin (PH) of Lepidoptera (butterflies and moths).